The primary structure comprises 220 residues: MIKWLARPADYGSVWDAMKAFTAARGPGTADEIWLCEHAPVYTLGQAGRPEHLLNPGLIPVVHCDRGGQVTYHGPGQVLAYTLFDLRRAGLYVREYVDMLEQATLATLRELGLEQACRKPGAPGIYVPQPGGELAKIAALGVKVRNGYAYHGLALNIDMDLSPFLGINPCGYEGLRTVDLAACGVRTSVERAGELLAAQLARAHGHAVQQRAAALAGVPG.

The 182-residue stretch at P27 to V208 folds into the BPL/LPL catalytic domain. Substrate contacts are provided by residues R66–H73, A139–G141, and G152–A154. C170 acts as the Acyl-thioester intermediate in catalysis.

It belongs to the LipB family.

It is found in the cytoplasm. The enzyme catalyses octanoyl-[ACP] + L-lysyl-[protein] = N(6)-octanoyl-L-lysyl-[protein] + holo-[ACP] + H(+). Its pathway is protein modification; protein lipoylation via endogenous pathway; protein N(6)-(lipoyl)lysine from octanoyl-[acyl-carrier-protein]: step 1/2. Functionally, catalyzes the transfer of endogenously produced octanoic acid from octanoyl-acyl-carrier-protein onto the lipoyl domains of lipoate-dependent enzymes. Lipoyl-ACP can also act as a substrate although octanoyl-ACP is likely to be the physiological substrate. In Bordetella parapertussis (strain 12822 / ATCC BAA-587 / NCTC 13253), this protein is Octanoyltransferase.